The primary structure comprises 973 residues: UvrABC system protein A (973 aa).

ATP is bound at residue G34–S41. ABC transporter domains are found at residues W331–L609 and P629–K958. G662–S669 contributes to the ATP binding site. The C4-type zinc finger occupies C761 to C787.

The protein belongs to the ABC transporter superfamily. UvrA family. In terms of assembly, forms a heterotetramer with UvrB during the search for lesions.

It is found in the cytoplasm. The UvrABC repair system catalyzes the recognition and processing of DNA lesions. UvrA is an ATPase and a DNA-binding protein. A damage recognition complex composed of 2 UvrA and 2 UvrB subunits scans DNA for abnormalities. When the presence of a lesion has been verified by UvrB, the UvrA molecules dissociate. In Agrobacterium fabrum (strain C58 / ATCC 33970) (Agrobacterium tumefaciens (strain C58)), this protein is UvrABC system protein A.